A 385-amino-acid chain; its full sequence is Serine/threonine-protein kinase SBK1 (385 aa).

A Protein kinase domain is found at 32 to 297 (YEVIRELGKG…VFAHLGHRWM (266 aa)). ATP is bound by residues 38-46 (LGKGTYGKV) and K61. The Proton acceptor role is filled by D153. The segment covering 328-338 (TLSPTANTSNA) has biased composition (polar residues). The tract at residues 328-374 (TLSPTANTSNAIEPGSANHFTSMSTNSSVSSTNSYERSARDSPPTSR) is disordered. Positions 348 to 361 (TSMSTNSSVSSTNS) are enriched in low complexity.

This sequence belongs to the protein kinase superfamily. Ser/Thr protein kinase family. In terms of tissue distribution, mainly expressed in brain.

It localises to the cytoplasm. It catalyses the reaction L-seryl-[protein] + ATP = O-phospho-L-seryl-[protein] + ADP + H(+). The catalysed reaction is L-threonyl-[protein] + ATP = O-phospho-L-threonyl-[protein] + ADP + H(+). In terms of biological role, may be involved in the control of neuronal proliferation or migration in the brain of embryos. The sequence is that of Serine/threonine-protein kinase SBK1 (sbk1) from Danio rerio (Zebrafish).